The chain runs to 309 residues: Probable cell wall protein PGA50 (309 aa).

Positions 1-17 (MKLNLLLLLFIVELVAA) are cleaved as a signal peptide. 5 N-linked (GlcNAc...) asparagine glycosylation sites follow: Asn-67, Asn-115, Asn-248, Asn-267, and Asn-277. The disordered stretch occupies residues 241–281 (STTTFSSNGTSSGTTNGDTRAETKSSNSTQTSSSDKNSSQI). Ser-286 carries GPI-anchor amidated serine lipidation. A propeptide spans 287-309 (TGVANFVASFGMGTLLLFVLSLC) (removed in mature form).

It belongs to the IHD1 family. Post-translationally, the GPI-anchor is attached to the protein in the endoplasmic reticulum and serves to target the protein to the cell surface. There, the glucosamine-inositol phospholipid moiety is cleaved off and the GPI-modified mannoprotein is covalently attached via its lipidless GPI glycan remnant to the 1,6-beta-glucan of the outer cell wall layer.

Its subcellular location is the secreted. The protein resides in the cell wall. The protein localises to the membrane. In terms of biological role, probable GPI-anchored cell wall protein that may be involved in cell wall organization, hyphal growth, as well as in virulence. The polypeptide is Probable cell wall protein PGA50 (PGA50) (Candida albicans (strain SC5314 / ATCC MYA-2876) (Yeast)).